A 202-amino-acid polypeptide reads, in one-letter code: ATP-dependent dethiobiotin synthetase BioD (202 aa).

12-17 (GIGKTI) is a binding site for ATP. Thr16 is a Mg(2+) binding site. Lys32 is a catalytic residue. Position 36 (Ser36) interacts with substrate. Residues Asp43, 94–97 (EGAG), and 178–180 (PVV) contribute to the ATP site. The Mg(2+) site is built by Asp43 and Glu94.

The protein belongs to the dethiobiotin synthetase family. As to quaternary structure, homodimer. The cofactor is Mg(2+).

It localises to the cytoplasm. The enzyme catalyses (7R,8S)-7,8-diammoniononanoate + CO2 + ATP = (4R,5S)-dethiobiotin + ADP + phosphate + 3 H(+). It functions in the pathway cofactor biosynthesis; biotin biosynthesis; biotin from 7,8-diaminononanoate: step 1/2. Catalyzes a mechanistically unusual reaction, the ATP-dependent insertion of CO2 between the N7 and N8 nitrogen atoms of 7,8-diaminopelargonic acid (DAPA, also called 7,8-diammoniononanoate) to form a ureido ring. This is ATP-dependent dethiobiotin synthetase BioD from Sphingopyxis alaskensis (strain DSM 13593 / LMG 18877 / RB2256) (Sphingomonas alaskensis).